The sequence spans 541 residues: Zinc finger protein 513 (541 aa).

The disordered stretch occupies residues Met1–Pro118. A compositionally biased stretch (acidic residues) spans Leu44–Gly55. Phosphoserine occurs at positions 85 and 96. A compositionally biased stretch (basic and acidic residues) spans Glu103–Arg115. 8 C2H2-type zinc fingers span residues Tyr150–His172, Phe178–His200, Tyr206–His228, Phe360–His382, Phe388–His410, Tyr416–His438, Phe444–His466, and Phe472–His494. Residues Lys492 to Pro541 are disordered.

Belongs to the krueppel C2H2-type zinc-finger protein family. As to quaternary structure, binds DNA. Can associate with the proximal promoter regions of PAX6 and SP4, and their known targets including ARR3, RHO, OPN1MW2 and OPN1SW. Widely expressed. In the eye, expression is greatest in the retina and least in the lens and cornea.

The protein localises to the nucleus. Its function is as follows. Transcriptional regulator that plays a role in retinal development and maintenance. The protein is Zinc finger protein 513 (Znf513) of Mus musculus (Mouse).